The chain runs to 2410 residues: Cell wall alpha-1,3-glucan synthase ags1 (2410 aa).

S1643, S1644, and S1651 each carry phosphoserine. Position 1653 is a phosphothreonine (T1653). A disordered region spans residues 1685 to 1706; it reads SLSLGSRRGPGHTTEDDASDGL. Phosphoserine occurs at positions 1738 and 1812. The tract at residues 1796 to 1827 is disordered; it reads QDDLSDPARSVDSDSVSPPLPPFVAGSNPNAR. Positions 1802 to 1827 are enriched in low complexity; it reads PARSVDSDSVSPPLPPFVAGSNPNAR.

This sequence belongs to the glycosyltransferase group 1 family. In terms of assembly, interacts with sad1.

It catalyses the reaction [(1-&gt;3)-alpha-D-glucosyl](n) + UDP-alpha-D-glucose = [(1-&gt;3)-alpha-D-glucosyl](n+1) + UDP + H(+). Functionally, required for alpha-1,3-glucan and alpha-1,4-glucan production which are required for cell wall synthesis. The polypeptide is Cell wall alpha-1,3-glucan synthase ags1 (ags1) (Schizosaccharomyces pombe (strain 972 / ATCC 24843) (Fission yeast)).